The following is a 319-amino-acid chain: Mercury resistance probable Hg transport protein (319 aa).

The Hg(2+) site is built by Cys298, Cys299, Cys318, and Cys319.

This is Mercury resistance probable Hg transport protein from Streptomyces lividans.